The primary structure comprises 238 residues: Ribonuclease PH (238 aa).

Phosphate contacts are provided by residues Arg-86 and 124 to 126; that span reads GTR.

Belongs to the RNase PH family. As to quaternary structure, homohexameric ring arranged as a trimer of dimers.

The enzyme catalyses tRNA(n+1) + phosphate = tRNA(n) + a ribonucleoside 5'-diphosphate. Its function is as follows. Phosphorolytic 3'-5' exoribonuclease that plays an important role in tRNA 3'-end maturation. Removes nucleotide residues following the 3'-CCA terminus of tRNAs; can also add nucleotides to the ends of RNA molecules by using nucleoside diphosphates as substrates, but this may not be physiologically important. Probably plays a role in initiation of 16S rRNA degradation (leading to ribosome degradation) during starvation. This is Ribonuclease PH from Haemophilus influenzae (strain 86-028NP).